Reading from the N-terminus, the 70-residue chain is Large ribosomal subunit protein eL43 (70 aa).

Zn(2+) is bound by residues cysteine 36, cysteine 39, cysteine 55, and cysteine 58. The C4-type zinc-finger motif lies at 36–58 (CPYCKTTGKVIRLASGIWYCKKC).

The protein belongs to the eukaryotic ribosomal protein eL43 family. Putative zinc-binding subfamily. As to quaternary structure, part of the 50S ribosomal subunit. Zn(2+) is required as a cofactor.

In terms of biological role, binds to the 23S rRNA. This chain is Large ribosomal subunit protein eL43, found in Saccharolobus solfataricus (strain ATCC 35092 / DSM 1617 / JCM 11322 / P2) (Sulfolobus solfataricus).